The chain runs to 112 residues: Large ribosomal subunit protein uL1 (112 aa).

The protein belongs to the universal ribosomal protein uL1 family.

The protein is Large ribosomal subunit protein uL1 (rpl-10a) of Caenorhabditis remanei (Caenorhabditis vulgaris).